Reading from the N-terminus, the 511-residue chain is Bifunctional purine biosynthesis protein PurH (511 aa).

The region spanning 1 to 145 (MKKRALVSVS…KNHKFVSVIV (145 aa)) is the MGS-like domain.

It belongs to the PurH family.

The catalysed reaction is (6R)-10-formyltetrahydrofolate + 5-amino-1-(5-phospho-beta-D-ribosyl)imidazole-4-carboxamide = 5-formamido-1-(5-phospho-D-ribosyl)imidazole-4-carboxamide + (6S)-5,6,7,8-tetrahydrofolate. It carries out the reaction IMP + H2O = 5-formamido-1-(5-phospho-D-ribosyl)imidazole-4-carboxamide. The protein operates within purine metabolism; IMP biosynthesis via de novo pathway; 5-formamido-1-(5-phospho-D-ribosyl)imidazole-4-carboxamide from 5-amino-1-(5-phospho-D-ribosyl)imidazole-4-carboxamide (10-formyl THF route): step 1/1. It participates in purine metabolism; IMP biosynthesis via de novo pathway; IMP from 5-formamido-1-(5-phospho-D-ribosyl)imidazole-4-carboxamide: step 1/1. This chain is Bifunctional purine biosynthesis protein PurH, found in Bacillus mycoides (strain KBAB4) (Bacillus weihenstephanensis).